We begin with the raw amino-acid sequence, 219 residues long: Probable nicotinate-nucleotide adenylyltransferase (219 aa).

The protein belongs to the NadD family.

The enzyme catalyses nicotinate beta-D-ribonucleotide + ATP + H(+) = deamido-NAD(+) + diphosphate. Its pathway is cofactor biosynthesis; NAD(+) biosynthesis; deamido-NAD(+) from nicotinate D-ribonucleotide: step 1/1. Functionally, catalyzes the reversible adenylation of nicotinate mononucleotide (NaMN) to nicotinic acid adenine dinucleotide (NaAD). The polypeptide is Probable nicotinate-nucleotide adenylyltransferase (Pseudoalteromonas atlantica (strain T6c / ATCC BAA-1087)).